Consider the following 295-residue polypeptide: Aquaporin-9 (295 aa).

The Cytoplasmic segment spans residues 1-24 (MPSEKDGAKKSLMQRLALKSRIAK). Residues 25 to 43 (ETLSEFLGTFIMIVLGCSS) traverse the membrane as a helical segment. Residues 44-57 (IAQAVLSRERFGGI) are Extracellular-facing. The chain crosses the membrane as a helical span at residues 58-77 (ITINIGFASAVVMALYVTFG). Over 78–79 (IS) the chain is Cytoplasmic. The segment at residues 80–92 (GGHINPAVSFAMC) is an intramembrane region (discontinuously helical). Residues 84-86 (NPA) carry the NPA 1 motif. At 93-98 (AFGRME) the chain is on the cytoplasmic side. A helical membrane pass occupies residues 99 to 123 (WFKFPFYVGAQFLGAFVGAATVFGI). The Extracellular segment spans residues 124 to 160 (YYDGLMAFAGGKLLVVGENATAFIFATYPAPFISTPG). Residues 161 to 178 (AFVDQVVSTMFLLLIVFA) traverse the membrane as a helical segment. Residues 179-190 (MFDSRNLGVPRG) are Cytoplasmic-facing. A helical membrane pass occupies residues 191 to 207 (LEPVVIGLLIIVLSCSL). The Extracellular portion of the chain corresponds to 208–210 (GLN). An intramembrane region (discontinuously helical) is located at residues 211 to 225 (SGCAMNPARDLSPRL). Positions 216–218 (NPA) match the NPA 2 motif. Residues 226-243 (FTALAGWGFEVFTVGNNF) lie on the Extracellular side of the membrane. Residues 244–264 (WWIPVVGPMIGAFLGGLIYIL) traverse the membrane as a helical segment. At 265 to 295 (FIQMHHSKLDPDMKAEPSENNLEKHELSVIM) the chain is on the cytoplasmic side.

Belongs to the MIP/aquaporin (TC 1.A.8) family. As to quaternary structure, homotetramer; each monomer provides an independent glycerol/water pore. Detected in testis and liver. Detected in immature spermatocytes and in interstitial Leydig cells.

The protein resides in the cell membrane. The protein localises to the basolateral cell membrane. The enzyme catalyses H2O(in) = H2O(out). It carries out the reaction glycerol(in) = glycerol(out). The catalysed reaction is urea(in) = urea(out). It catalyses the reaction (S)-lactate(in) = (S)-lactate(out). The enzyme catalyses NH4(+)(in) = NH4(+)(out). It carries out the reaction uracil(in) = uracil(out). The catalysed reaction is adenine(out) = adenine(in). It catalyses the reaction 3-hydroxybutanoate(in) = 3-hydroxybutanoate(out). The enzyme catalyses D-sorbitol(in) = D-sorbitol(out). It carries out the reaction D-mannitol(in) = D-mannitol(out). The catalysed reaction is H2O2(out) = H2O2(in). It catalyses the reaction arsenite(in) = arsenite(out). The enzyme catalyses selenite(in) = selenite(out). Channel activity is inhibited by mercury ions and phloretin. Aquaglyceroporins form homotetrameric transmembrane channels, with each monomer independently mediating glycerol and water transport across the plasma membrane along their osmotic gradient. AQP9 is the primary route for glycerol uptake in hepatocytes, supporting hepatic gluconeogenesis. It exhibits broad specificity and may transport various small, non-charged solutes, including carbamides, polyols, purines, and pyrimidines. AQP9 may also facilitate hepatic urea extrusion. Due to its permeability to lactate, AQP9 might participate in the astrocyte-to-neuron lactate shuttle, supplying neurons with energy. Additionally, AQP9 is permeable to arsenite, contributing to arsenic excretion by the liver and providing partial protection against arsenic toxicity. It is also permeable to H2O2 in vivo. Could also be permeable to ammonium. This Rattus norvegicus (Rat) protein is Aquaporin-9.